The sequence spans 508 residues: MIKNIITTIDDYARTQPNNVVYDVQGVTHTYAELKAYSDALAAHLDTLDLPAKDPIIVFGGQTFEMIATFLGVVKSGRAYIPIDTHSPNERLTMINEIAKPAAVIAVADLPTGVGTTPVITPDQLAAIFATPVDYQADHVVSGDDNYYIIFTSGTTGMPKGVQISHDNLVSYVDWMLSDDFGLPDQPNSLSQPPYSFDLSVMDVYPTLALGGTLYALPKAVTDDFKQLFAALPTLPINVWVSTPSFMDICLLEPKFNAENLPTLTHFLFCGEELTHKTAATLKKRFPDARIFNTYGPTETCVAVTQIEITDAALAQYDRLPIGYAKADTRILVVDENGEAVPNGTEGELIIAGPSVSKGYLNNSEKTAKAFFELDGQPAYHSGDIGTMDADGLFRYRGRVDFQIKMHGYRIELEEVDHFLAQQQHIKQAVAVPKYDKEHKVTQMIAYVVPKPNDFESDFALTTAIKKDLQGMMMEYMIPQRFVYQTSLPLTPNGKIDVKSIIKEVNPE.

152–153 lines the ATP pocket; the sequence is TS. Aspartate 198 provides a ligand contact to D-alanine. 293–298 lines the ATP pocket; the sequence is NTYGPT. Valine 302 is a D-alanine binding site. ATP is bound by residues aspartate 384, 396-399, and lysine 495; that span reads YRGR. A D-alanine-binding site is contributed by lysine 495.

It belongs to the ATP-dependent AMP-binding enzyme family. DltA subfamily.

It localises to the cytoplasm. It catalyses the reaction holo-[D-alanyl-carrier protein] + D-alanine + ATP = D-alanyl-[D-alanyl-carrier protein] + AMP + diphosphate. It participates in cell wall biogenesis; lipoteichoic acid biosynthesis. Functionally, catalyzes the first step in the D-alanylation of lipoteichoic acid (LTA), the activation of D-alanine and its transfer onto the D-alanyl carrier protein (Dcp) DltC. In an ATP-dependent two-step reaction, forms a high energy D-alanyl-AMP intermediate, followed by transfer of the D-alanyl residue as a thiol ester to the phosphopantheinyl prosthetic group of the Dcp. D-alanylation of LTA plays an important role in modulating the properties of the cell wall in Gram-positive bacteria, influencing the net charge of the cell wall. The polypeptide is D-alanine--D-alanyl carrier protein ligase (Lactiplantibacillus plantarum (strain ATCC BAA-793 / NCIMB 8826 / WCFS1) (Lactobacillus plantarum)).